A 1683-amino-acid chain; its full sequence is E3 ubiquitin-protein ligase SHPRH (1683 aa).

The segment at M1–P43 is disordered. Positions R12–E32 are enriched in basic and acidic residues. S266 is subject to Phosphoserine. The region spanning Y307–T389 is the Helicase ATP-binding; first part domain. D373–T380 is an ATP binding site. The region spanning Q438–K512 is the H15 domain. The interval K525–S607 is disordered. Over residues I534–D547 the composition is skewed to basic and acidic residues. Residues K568 to K588 are compositionally biased toward basic residues. The residue at position 635 (S635) is a Phosphoserine. The PHD-type zinc finger occupies R658–A709. Residues M710–E868 form the Helicase ATP-binding; second part domain. Positions D819 to Q822 match the DEAQ box motif. An RING-type zinc finger spans residues C1432 to R1479. The 159-residue stretch at A1514–A1672 folds into the Helicase C-terminal domain.

This sequence belongs to the SNF2/RAD54 helicase family. In terms of assembly, homodimer. Interacts with HLTF, PCNA, UBE2N and RAD18. As to expression, broadly expressed.

The enzyme catalyses S-ubiquitinyl-[E2 ubiquitin-conjugating enzyme]-L-cysteine + [acceptor protein]-L-lysine = [E2 ubiquitin-conjugating enzyme]-L-cysteine + N(6)-ubiquitinyl-[acceptor protein]-L-lysine.. It participates in protein modification; protein ubiquitination. Its function is as follows. E3 ubiquitin-protein ligase involved in DNA repair. Upon genotoxic stress, accepts ubiquitin from the UBE2N-UBE2V2 E2 complex and transfers it to 'Lys-164' of PCNA which had been monoubiquitinated by UBE2A/B-RAD18, promoting the formation of non-canonical poly-ubiquitin chains linked through 'Lys-63'. The polypeptide is E3 ubiquitin-protein ligase SHPRH (SHPRH) (Homo sapiens (Human)).